The chain runs to 405 residues: Eukaryotic initiation factor 4A (405 aa).

The short motif at 32–60 (PTFESMGLREELLRGIFNYGFEKPSAIQQ) is the Q motif element. The Helicase ATP-binding domain maps to 63 to 233 (ILPIIKGRDT…EKFMTKPVRI (171 aa)). Position 76–83 (76–83 (AQSGTGKT)) interacts with ATP. Residues 181–184 (DEAD) carry the DEAD box motif. The Helicase C-terminal domain maps to 244-405 (GIKQFFVSVE…EMPVNFASII (162 aa)).

Belongs to the DEAD box helicase family. eIF4A subfamily.

Its subcellular location is the cytoplasm. It catalyses the reaction ATP + H2O = ADP + phosphate + H(+). In terms of biological role, ATP-dependent RNA helicase which is a subunit of the eIF4F complex involved in cap recognition and is required for mRNA binding to ribosome. In the current model of translation initiation, eIF4A unwinds RNA secondary structures in the 5'-UTR of mRNAs which is necessary to allow efficient binding of the small ribosomal subunit, and subsequent scanning for the initiator codon. In Dictyostelium discoideum (Social amoeba), this protein is Eukaryotic initiation factor 4A (tifA).